Reading from the N-terminus, the 294-residue chain is Small ribosomal subunit protein uS2 (294 aa).

The tract at residues 254 to 294 (ESSNTEAPVAETAAAEAPVADAAIEAPVAEEAKTTEADDTK) is disordered. Positions 259-282 (EAPVAETAAAEAPVADAAIEAPVA) are enriched in low complexity. Residues 283 to 294 (EEAKTTEADDTK) show a composition bias toward basic and acidic residues.

The protein belongs to the universal ribosomal protein uS2 family.

This chain is Small ribosomal subunit protein uS2, found in Renibacterium salmoninarum (strain ATCC 33209 / DSM 20767 / JCM 11484 / NBRC 15589 / NCIMB 2235).